Here is a 78-residue protein sequence, read N- to C-terminus: Defensin-like protein 308 (78 aa).

The N-terminal stretch at 1–19 (MKTSAFFIAVLLILSCSSS) is a signal peptide. 3 cysteine pairs are disulfide-bonded: Cys31-Cys50, Cys37-Cys55, and Cys41-Cys57.

The protein belongs to the DEFL family.

It localises to the secreted. The chain is Defensin-like protein 308 from Arabidopsis thaliana (Mouse-ear cress).